A 593-amino-acid polypeptide reads, in one-letter code: Auxin response factor 12 (593 aa).

The segment at residues 126–228 is a DNA-binding region (TF-B3); the sequence is FTKVLTASDT…ELRVGIRRAR (103 aa). The region spanning 511 to 592 is the PB1 domain; it reads RTCTKVQMQG…MVKKIFIQKR (82 aa).

It belongs to the ARF family. As to quaternary structure, homodimers and heterodimers.

It is found in the nucleus. Auxin response factors (ARFs) are transcriptional factors that bind specifically to the DNA sequence 5'-TGTCTC-3' found in the auxin-responsive promoter elements (AuxREs). Could act as transcriptional activator or repressor. Formation of heterodimers with Aux/IAA proteins may alter their ability to modulate early auxin response genes expression. This chain is Auxin response factor 12 (ARF12), found in Arabidopsis thaliana (Mouse-ear cress).